The following is a 131-amino-acid chain: Small ribosomal subunit protein uS11 (131 aa).

The protein belongs to the universal ribosomal protein uS11 family. Part of the 30S ribosomal subunit. Interacts with proteins S7 and S18. Binds to IF-3.

Located on the platform of the 30S subunit, it bridges several disparate RNA helices of the 16S rRNA. Forms part of the Shine-Dalgarno cleft in the 70S ribosome. This is Small ribosomal subunit protein uS11 from Deinococcus geothermalis (strain DSM 11300 / CIP 105573 / AG-3a).